The following is a 147-amino-acid chain: Hemoglobin subunit gamma-1 (147 aa).

Gly-2 carries the N-acetylglycine modification. The 145-residue stretch at 3 to 147 (HFTEEDKATI…VASALSSRYH (145 aa)) folds into the Globin domain. At Thr-13 the chain carries Phosphothreonine. Residues Ser-45, Ser-51, and Ser-53 each carry the phosphoserine modification. Residue Lys-60 is modified to N6-acetyllysine. Residue His-64 participates in heme b binding. Lys-83 bears the N6-acetyllysine mark. His-93 is a heme b binding site. An S-nitrosocysteine modification is found at Cys-94. Phosphoserine is present on Ser-140.

It belongs to the globin family. Heterotetramer of two alpha chains and two gamma chains in fetal hemoglobin (Hb F). As to expression, red blood cells.

In terms of biological role, gamma chains make up the fetal hemoglobin F, in combination with alpha chains. In Gorilla gorilla gorilla (Western lowland gorilla), this protein is Hemoglobin subunit gamma-1 (HBG1).